A 521-amino-acid chain; its full sequence is Glutamate--cysteine ligase (521 aa).

Belongs to the glutamate--cysteine ligase type 1 family. Type 1 subfamily.

It carries out the reaction L-cysteine + L-glutamate + ATP = gamma-L-glutamyl-L-cysteine + ADP + phosphate + H(+). The protein operates within sulfur metabolism; glutathione biosynthesis; glutathione from L-cysteine and L-glutamate: step 1/2. In Buchnera aphidicola subsp. Baizongia pistaciae (strain Bp), this protein is Glutamate--cysteine ligase (gshA).